The primary structure comprises 774 residues: Alpha,alpha-trehalose phosphorylase (774 aa).

Residue 369–370 (WD) coordinates substrate. The active-site Proton donor is the E498. 610 to 611 (KQ) is a substrate binding site.

The protein belongs to the glycosyl hydrolase 65 family. As to quaternary structure, homodimer.

It carries out the reaction alpha,alpha-trehalose + phosphate = beta-D-glucose 1-phosphate + D-glucose. Its pathway is glycan degradation; trehalose degradation. Inhibited by Cu(2+), Hg(2+), Mg(2+), Mn(2+), Pb(2+) and Zn(2+). Functionally, catalyzes the reversible phosphorolytic cleavage of trehalose. Phosphorolysis is specific for trehalose, but D-xylose, D-galactose, L-arabinose, D-fucose, L-fucose, D-glucosamine and 2-deoxy D-glucose can act as substitutes for D-glucose in the synthetic reaction. This Thermoanaerobacter brockii (Thermoanaerobium brockii) protein is Alpha,alpha-trehalose phosphorylase (treP).